The chain runs to 65 residues: Large ribosomal subunit protein uL29 (65 aa).

It belongs to the universal ribosomal protein uL29 family.

In Coxiella burnetii (strain CbuK_Q154) (Coxiella burnetii (strain Q154)), this protein is Large ribosomal subunit protein uL29.